The sequence spans 324 residues: MKTAKIYQYQLPMDSGVILREQRLQQRDGLVIELSDGIHTARGEVAPLPEFSQETLEQAREDLISLTQSWLNNEELDLDSNCPSVAFGFSMALLELEKQLPQEGNYQAAPLCSGDPDDLVVKLNEMSGKKIAKIKVGLYEPIRDGMVVNMFLELISDLSLRLDANRGWTTKKAEQFANYIHPQFRSRIEFLEEPCTTPEESLAFSKATNIAIAWDETVRDDGFTVETQEGVAAIVIKPTLVGSVEKCISLIEQAHQLGMQAVISSSIESSLALTQLARLAAWKTPETIPGLDTIDLFKMQLDTSWPNCDLPVAQLADLEVIWEN.

Lys-135 functions as the Proton donor in the catalytic mechanism. Residues Asp-163, Glu-192, and Asp-215 each contribute to the Mg(2+) site. The active-site Proton acceptor is Lys-237.

The protein belongs to the mandelate racemase/muconate lactonizing enzyme family. MenC type 1 subfamily. It depends on a divalent metal cation as a cofactor.

The catalysed reaction is (1R,6R)-6-hydroxy-2-succinyl-cyclohexa-2,4-diene-1-carboxylate = 2-succinylbenzoate + H2O. The protein operates within quinol/quinone metabolism; 1,4-dihydroxy-2-naphthoate biosynthesis; 1,4-dihydroxy-2-naphthoate from chorismate: step 4/7. It functions in the pathway quinol/quinone metabolism; menaquinone biosynthesis. In terms of biological role, converts 2-succinyl-6-hydroxy-2,4-cyclohexadiene-1-carboxylate (SHCHC) to 2-succinylbenzoate (OSB). In Aliivibrio fischeri (strain MJ11) (Vibrio fischeri), this protein is o-succinylbenzoate synthase.